The following is a 94-amino-acid chain: Cell division protein FtsB (94 aa).

Residues 1–3 lie on the Cytoplasmic side of the membrane; it reads MRW. A helical transmembrane segment spans residues 4–21; it reads LTVGLLAAIGLLQYPLWV. Residues 22–94 lie on the Periplasmic side of the membrane; sequence GKGGWLKVWE…VQIPEKVPGK (73 aa). A coiled-coil region spans residues 31 to 73; sequence EYDRQLQQQKEVTRKLEIRNAGLDAEVRDLKQGYDAIEERARF.

The protein belongs to the FtsB family. In terms of assembly, part of a complex composed of FtsB, FtsL and FtsQ.

Its subcellular location is the cell inner membrane. Functionally, essential cell division protein. May link together the upstream cell division proteins, which are predominantly cytoplasmic, with the downstream cell division proteins, which are predominantly periplasmic. The chain is Cell division protein FtsB from Dechloromonas aromatica (strain RCB).